The sequence spans 501 residues: Sensor histidine kinase PdtaS (501 aa).

The GAF stretch occupies residues 4–150 (LGDLLAEHTV…HLETAYRLCA (147 aa)). Positions 179 to 291 (DGFIRLDVDG…TEVKRRDRAL (113 aa)) are PAS-like. The 196-residue stretch at 300–495 (EIHHRVKNNL…DVVLRVPVGR (196 aa)) folds into the Histidine kinase domain. Phosphohistidine; by autocatalysis is present on histidine 303.

Autophosphorylated.

It localises to the cytoplasm. The enzyme catalyses ATP + protein L-histidine = ADP + protein N-phospho-L-histidine.. Its function is as follows. Member of the two-component regulatory system PdtaR/PdtaS. This two-component system plays an essential role in mycobacterial adaptation to poor nutrient conditions. Nutrient deprivation results in increasing intracellular concentrations of cyclic diguanosine monophosphate (c-di-GMP), which binds to the PdtaS sensor and promotes its autophosphorylation, leading to the activation of the signaling cascade. The phosphate group is then transferred to PdtaR. In addition, the PdtaR/PdtaS two-component system controls copper and nitric oxide (NO) resistance downstream of the intramembrane protease Rip1. This coupled Rip1/PdtaS/PdtaR circuit controls NO resistance and acute lung infection in mice by relieving PdtaR/PdtaS-mediated repression of isonitrile chalkophore biosynthesis. Two signals are required to fully inactivate the PdtaR/PdtaS system and mediate NO resistance: a cytoplasmic inhibitory signal through the PdtaS kinase mediated by direct sensing of NO and the production of PPE1-5', an NO-induced small RNA, to sequester PdtaR. This Mycobacterium tuberculosis (strain CDC 1551 / Oshkosh) protein is Sensor histidine kinase PdtaS (pdtaS).